The primary structure comprises 561 residues: Acyl-CoA ligase frbB (561 aa).

ATP is bound by residues 213–221 (TSGTSGAQK), 354–359 (PGWGLT), Asp437, Arg456, and Lys551. Residues 284–354 (DLKRVLGSIA…TLRPKWHLQP (71 aa)) are SBD1. Residues 355–417 (GWGLTEGGGA…MKSPSVIAGY (63 aa)) form an SBD2 region.

This sequence belongs to the ATP-dependent AMP-binding enzyme family.

It participates in antifungal biosynthesis. In terms of biological role, acyl-CoA ligase; part of the gene cluster that mediates the biosynthesis of the antifungal antibiotic FR901469, an inhibitor of beta-1,3-glucansynthase, exerting antifungal activity against the pathogenes Candida albicans and Aspergillus fumigatus. FR901469 is a cyclic depsipeptide containing 12 amino acid residues and a fatty acid chain. The NRPS frbI contains 12 modules responsible for the formation of the depsipeptide backbone which is denoted as Acyl-Thr-Ala-Tyr-Val-4OHPro-Thr-Thr-3OHPro-threo3OHGln-Gly-Thr-Orn-OH (C71H116N14O23). The PKS frbB is probably involved in the production of the hydrocarbon chain, and the acyl-CoA ligase frbC might be involved in the transport of the chain to the peptide ptoduct of frbI. Because FR901469 contains 3 hydroxylated amino acid residues, the 3 oxygenases frbA, frbH, and frbJ might be participating in amino acid hydroxylation. As no thioesterase domains were detected in frbI or frbB, the thioesterases frbD and frbE may instead release and cyclize the products of the NRPS and PKS, respectively. In Dothideomycetidae sp. (strain 11243) (Fungal sp. (strain No.11243)), this protein is Acyl-CoA ligase frbB.